The primary structure comprises 33 residues: MAEEIFNTAVITFTLVLVGLGAGYLLLRLTPDD.

A helical transmembrane segment spans residues 5–25 (IFNTAVITFTLVLVGLGAGYL).

This sequence belongs to the PetM family. In terms of assembly, the 4 large subunits of the cytochrome b6-f complex are cytochrome b6, subunit IV (17 kDa polypeptide, PetD), cytochrome f and the Rieske protein, while the 4 small subunits are PetG, PetL, PetM and PetN. The complex functions as a dimer.

It is found in the cellular thylakoid membrane. In terms of biological role, component of the cytochrome b6-f complex, which mediates electron transfer between photosystem II (PSII) and photosystem I (PSI), cyclic electron flow around PSI, and state transitions. The sequence is that of Cytochrome b6-f complex subunit 7 from Thermosynechococcus vestitus (strain NIES-2133 / IAM M-273 / BP-1).